The primary structure comprises 439 residues: Tol-Pal system protein TolB (439 aa).

The N-terminal stretch at 1 to 22 (MKKPLRWLAALTVLLLPLSALA) is a signal peptide.

Belongs to the TolB family. As to quaternary structure, the Tol-Pal system is composed of five core proteins: the inner membrane proteins TolA, TolQ and TolR, the periplasmic protein TolB and the outer membrane protein Pal. They form a network linking the inner and outer membranes and the peptidoglycan layer.

The protein resides in the periplasm. Its function is as follows. Part of the Tol-Pal system, which plays a role in outer membrane invagination during cell division and is important for maintaining outer membrane integrity. The sequence is that of Tol-Pal system protein TolB from Xanthomonas oryzae pv. oryzae (strain KACC10331 / KXO85).